Here is a 221-residue protein sequence, read N- to C-terminus: Pectate lyase C (221 aa).

An N-terminal signal peptide occupies residues methionine 1–alanine 27.

The protein belongs to the polysaccharide lyase 3 family. The cofactor is Ca(2+).

It is found in the secreted. The enzyme catalyses Eliminative cleavage of (1-&gt;4)-alpha-D-galacturonan to give oligosaccharides with 4-deoxy-alpha-D-galact-4-enuronosyl groups at their non-reducing ends.. It catalyses the reaction Eliminative cleavage of (1-&gt;4)-alpha-D-galacturonan methyl ester to give oligosaccharides with 4-deoxy-6-O-methyl-alpha-D-galact-4-enuronosyl groups at their non-reducing ends.. It functions in the pathway glycan metabolism; pectin degradation; 2-dehydro-3-deoxy-D-gluconate from pectin: step 2/5. Catalyzes the depolymerization of both polygalacturonate and pectins of methyl esterification degree from 22 to 89%, with an endo mode of action. In contrast to the majority of pectate lyases, displays high activity on highly methylated pectins. Is also able to cleave trigalacturonate to galacturonic acid and unsaturated digalacturonate. The chain is Pectate lyase C (pelC) from Bacillus subtilis (strain 168).